The sequence spans 183 residues: Photosystem II extrinsic protein V (183 aa).

Residues 1–31 form the signal peptide; the sequence is MTFGHCRRASTLRSAFVLGLCGLLLAGCSGA. 4 residues coordinate heme c: Cys-84, Cys-87, His-88, and Cys-138.

Belongs to the cytochrome c family. PsbV subfamily. As to quaternary structure, PSII is composed of 1 copy each of membrane proteins PsbA, PsbB, PsbC, PsbD, PsbE, PsbF, PsbH, PsbI, PsbJ, PsbK, PsbL, PsbM, PsbT, PsbX, Psb30/Ycf12, peripheral proteins PsbO, CyanoQ (PsbQ), PsbU, PsbV and a large number of cofactors. It forms dimeric complexes. Heme c serves as cofactor.

Its subcellular location is the cell inner membrane. Its function is as follows. Probably one of the extrinsic, lumenal subunits of photosystem II (PSII). PSII is a light-driven water plastoquinone oxidoreductase, using light energy to abstract electrons from H(2)O, generating a proton gradient subsequently used for ATP formation. The extrinsic proteins stabilize the structure of photosystem II oxygen-evolving complex (OEC), the ion environment of oxygen evolution and protect the OEC against heat-induced inactivation. Low-potential cytochrome c that plays a role in the OEC of PSII. This is Photosystem II extrinsic protein V (psbV1) from Gloeobacter violaceus (strain ATCC 29082 / PCC 7421).